Reading from the N-terminus, the 658-residue chain is Threonine--tRNA ligase (658 aa).

The 64-residue stretch at 1–64 folds into the TGS domain; it reads MSNTVSLQFP…GASGKVEIIT (64 aa). Residues 246 to 548 form a catalytic region; it reads DHRRLGREMD…LIENFAGHMP (303 aa). Zn(2+) contacts are provided by Cys343, His394, and His525.

It belongs to the class-II aminoacyl-tRNA synthetase family. As to quaternary structure, homodimer. The cofactor is Zn(2+).

Its subcellular location is the cytoplasm. It catalyses the reaction tRNA(Thr) + L-threonine + ATP = L-threonyl-tRNA(Thr) + AMP + diphosphate + H(+). In terms of biological role, catalyzes the attachment of threonine to tRNA(Thr) in a two-step reaction: L-threonine is first activated by ATP to form Thr-AMP and then transferred to the acceptor end of tRNA(Thr). Also edits incorrectly charged L-seryl-tRNA(Thr). The polypeptide is Threonine--tRNA ligase (Brucella melitensis biotype 1 (strain ATCC 23456 / CCUG 17765 / NCTC 10094 / 16M)).